The primary structure comprises 274 residues: Large ribosomal subunit protein uL2 (274 aa).

The tract at residues 223–274 (VAMNPVDHPHGGGEGRTSGGRHPVTPWGVPTKGYKTRSNKRTDKYIVRRRNK) is disordered.

The protein belongs to the universal ribosomal protein uL2 family. Part of the 50S ribosomal subunit. Forms a bridge to the 30S subunit in the 70S ribosome.

Its function is as follows. One of the primary rRNA binding proteins. Required for association of the 30S and 50S subunits to form the 70S ribosome, for tRNA binding and peptide bond formation. It has been suggested to have peptidyltransferase activity; this is somewhat controversial. Makes several contacts with the 16S rRNA in the 70S ribosome. This chain is Large ribosomal subunit protein uL2, found in Shewanella baltica (strain OS223).